Reading from the N-terminus, the 309-residue chain is Porphobilinogen deaminase (309 aa).

S-(dipyrrolylmethanemethyl)cysteine is present on Cys-242.

Belongs to the HMBS family. Monomer. Dipyrromethane serves as cofactor.

The enzyme catalyses 4 porphobilinogen + H2O = hydroxymethylbilane + 4 NH4(+). Its pathway is porphyrin-containing compound metabolism; protoporphyrin-IX biosynthesis; coproporphyrinogen-III from 5-aminolevulinate: step 2/4. Its function is as follows. Tetrapolymerization of the monopyrrole PBG into the hydroxymethylbilane pre-uroporphyrinogen in several discrete steps. This Shewanella woodyi (strain ATCC 51908 / MS32) protein is Porphobilinogen deaminase.